The chain runs to 350 residues: Twinfilin-1 (350 aa).

Serine 2 is modified (N-acetylserine). The ADF-H 1 domain maps to 2 to 139; sequence SHRTGIQASE…SLHGYKKYLL (138 aa). Phosphoserine occurs at positions 143 and 277. An ADF-H 2 domain is found at 175-313; sequence LQGVAFPISR…TADFLYEEVH (139 aa). At tyrosine 309 the chain carries Phosphotyrosine. Positions 316–350 are disordered; it reads QHAHKQSFAKPKGPAGKRGIRRLIRGPAETEATTD. A Phosphothreonine modification is found at threonine 349.

The protein belongs to the actin-binding proteins ADF family. Twinfilin subfamily. In terms of assembly, interacts with G-actin; ADP-actin form and capping protein (CP). May also be able to interact with TWF2 and phosphoinositides, PI(4,5)P2. When bound to PI(4,5)P2, it is down-regulated. Interacts with ACTG1. Post-translationally, phosphorylated on serine and threonine residues.

The protein resides in the cytoplasm. It localises to the cytoskeleton. In terms of biological role, actin-binding protein involved in motile and morphological processes. Inhibits actin polymerization, likely by sequestering G-actin. By capping the barbed ends of filaments, it also regulates motility. Seems to play an important role in clathrin-mediated endocytosis and distribution of endocytic organelles. The chain is Twinfilin-1 (TWF1) from Pongo abelii (Sumatran orangutan).